Reading from the N-terminus, the 113-residue chain is Putative membrane protein insertion efficiency factor (113 aa).

This sequence belongs to the UPF0161 family.

The protein localises to the cell inner membrane. In terms of biological role, could be involved in insertion of integral membrane proteins into the membrane. This is Putative membrane protein insertion efficiency factor from Campylobacter jejuni subsp. jejuni serotype O:2 (strain ATCC 700819 / NCTC 11168).